Consider the following 199-residue polypeptide: RNA-binding protein, mRNA-processing factor 2a (199 aa).

The RRM domain maps to Arg20–Ala97.

In terms of assembly, interacts with Bucky ball (BUC); to mediate Balbiani body formation and oocyte polarity during early oogenesis.

Its subcellular location is the cytoplasm. It localises to the nucleus. The protein resides in the stress granule. In terms of biological role, RNA-binding protein involved in the regulation of smooth muscle cell differentiation and proliferation in the gastrointestinal system. RNA-binding protein localized in Balbiani body (electron-dense aggregates in the oocyte) and germ plasm during oogenesis, and may be required to maintain germ plasm mRNA translational repression. Translational regulator during topographic map formation in the visual system. Establishes oocyte polarity through interaction with Bucky ball (BUC). Acts as a pre-mRNA alternative splicing regulator. Mediates ACTN1 and FLNB alternative splicing. Likely binds to mRNA tandem CAC trinucleotide or CA dinucleotide motifs. The protein is RNA-binding protein, mRNA-processing factor 2a of Danio rerio (Zebrafish).